Here is a 253-residue protein sequence, read N- to C-terminus: Cell division protein ZapD (253 aa).

The protein belongs to the ZapD family. In terms of assembly, interacts with FtsZ.

The protein resides in the cytoplasm. Cell division factor that enhances FtsZ-ring assembly. Directly interacts with FtsZ and promotes bundling of FtsZ protofilaments, with a reduction in FtsZ GTPase activity. In Bordetella bronchiseptica (strain ATCC BAA-588 / NCTC 13252 / RB50) (Alcaligenes bronchisepticus), this protein is Cell division protein ZapD.